The chain runs to 219 residues: Uracil-DNA glycosylase (219 aa).

Catalysis depends on aspartate 61, which acts as the Proton acceptor.

This sequence belongs to the uracil-DNA glycosylase (UDG) superfamily. UNG family.

The protein resides in the cytoplasm. The catalysed reaction is Hydrolyzes single-stranded DNA or mismatched double-stranded DNA and polynucleotides, releasing free uracil.. Its function is as follows. Excises uracil residues from the DNA which can arise as a result of misincorporation of dUMP residues by DNA polymerase or due to deamination of cytosine. The protein is Uracil-DNA glycosylase of Neisseria meningitidis serogroup A / serotype 4A (strain DSM 15465 / Z2491).